Here is a 99-residue protein sequence, read N- to C-terminus: Integration host factor subunit alpha (99 aa).

Belongs to the bacterial histone-like protein family. In terms of assembly, heterodimer of an alpha and a beta chain.

In terms of biological role, this protein is one of the two subunits of integration host factor, a specific DNA-binding protein that functions in genetic recombination as well as in transcriptional and translational control. The chain is Integration host factor subunit alpha (ihfA) from Xylella fastidiosa (strain 9a5c).